The primary structure comprises 205 residues: High frequency lysogenization protein HflD homolog (205 aa).

This sequence belongs to the HflD family.

It localises to the cytoplasm. It is found in the cell inner membrane. In Haemophilus influenzae (strain PittEE), this protein is High frequency lysogenization protein HflD homolog.